The primary structure comprises 601 residues: Leucine-rich repeat-containing protein 40 (601 aa).

LRR repeat units follow at residues 33–56, 79–101, 102–124, 125–148, 150–170, 171–193, 194–217, 219–239, 240–264, 266–285, 286–308, 309–334, 336–355, 397–420, 423–446, 447–469, 470–492, 493–516, 518–539, 540–563, and 565–586; these read ARKSGQLNLSGRGLTEVPASVWRL, QTDLTKLLLSSNKLQSIPDDVKL, LPALVVLDIHDNQLSSLPDSIGD, LEQLQKLILSHNKLTELPSGVWRL, NLRCLHLQQNLIEQIPRDLGQ, LVNLDELDLSNNHLIDIPESLAN, LQNLVKLDLSCNKLKSLPPAISQM, NLRMLDCSRNQMESIPPVLAQ, MESLEQLYLRHNKLRYLPELPCCKT, KELHCGNNQIEVLEAEHLKH, LNALSLLELRDNKVKSLPEEITL, LQGLERLDLTNNDISSLPCGLGTLPK, KSLSLEGNPLRAIRRDLLTK, IKTLKTLDYSEKQDATIPDDVFDA, GNPVANVNFSKNQLTAVPHRIVDL, KDSLADINLGFNKLTTIPADFCH, LKQLMHIDLRNNLLISLPMELEG, LIKLRSVILSFNRFKSFPEVLYRI, SLETILISSNQVGGIDAVQMKT, LSRLSTLDLSNNDIMQVPPELGNC, and SLRALMLDGNPFRNPRAAILIK.

The polypeptide is Leucine-rich repeat-containing protein 40 (lrrc40) (Danio rerio (Zebrafish)).